The chain runs to 466 residues: Phosphoenolpyruvate carboxykinase (ATP) (466 aa).

Residues arginine 61, tyrosine 196, and lysine 202 each contribute to the substrate site. Residues lysine 202, histidine 221, and 237–245 each bind ATP; that span reads GLSGTGKTT. The Mn(2+) site is built by lysine 202 and histidine 221. Aspartate 258 contacts Mn(2+). The ATP site is built by glutamate 286, arginine 323, and threonine 448. Arginine 323 is a binding site for substrate.

Belongs to the phosphoenolpyruvate carboxykinase (ATP) family. Requires Mn(2+) as cofactor.

It is found in the cytoplasm. It carries out the reaction oxaloacetate + ATP = phosphoenolpyruvate + ADP + CO2. It functions in the pathway carbohydrate biosynthesis; gluconeogenesis. Functionally, involved in the gluconeogenesis. Catalyzes the conversion of oxaloacetate (OAA) to phosphoenolpyruvate (PEP) through direct phosphoryl transfer between the nucleoside triphosphate and OAA. This is Phosphoenolpyruvate carboxykinase (ATP) from Deinococcus radiodurans (strain ATCC 13939 / DSM 20539 / JCM 16871 / CCUG 27074 / LMG 4051 / NBRC 15346 / NCIMB 9279 / VKM B-1422 / R1).